The following is a 1035-amino-acid chain: Isoleucine--tRNA ligase (1035 aa).

The 'HIGH' region motif lies at 48–58; that stretch reads PTANGRPHVGH. The short motif at 589-593 is the 'KMSKS' region element; that stretch reads KMSKH. Lys-592 contributes to the ATP binding site.

The protein belongs to the class-I aminoacyl-tRNA synthetase family. IleS type 2 subfamily. In terms of assembly, monomer. It depends on Zn(2+) as a cofactor.

It localises to the cytoplasm. The catalysed reaction is tRNA(Ile) + L-isoleucine + ATP = L-isoleucyl-tRNA(Ile) + AMP + diphosphate. In terms of biological role, catalyzes the attachment of isoleucine to tRNA(Ile). As IleRS can inadvertently accommodate and process structurally similar amino acids such as valine, to avoid such errors it has two additional distinct tRNA(Ile)-dependent editing activities. One activity is designated as 'pretransfer' editing and involves the hydrolysis of activated Val-AMP. The other activity is designated 'posttransfer' editing and involves deacylation of mischarged Val-tRNA(Ile). The polypeptide is Isoleucine--tRNA ligase (Clostridium acetobutylicum (strain ATCC 824 / DSM 792 / JCM 1419 / IAM 19013 / LMG 5710 / NBRC 13948 / NRRL B-527 / VKM B-1787 / 2291 / W)).